A 339-amino-acid chain; its full sequence is N-acetyl-gamma-glutamyl-phosphate reductase (339 aa).

Residue Cys-145 is part of the active site.

Belongs to the NAGSA dehydrogenase family. Type 1 subfamily.

Its subcellular location is the cytoplasm. It carries out the reaction N-acetyl-L-glutamate 5-semialdehyde + phosphate + NADP(+) = N-acetyl-L-glutamyl 5-phosphate + NADPH + H(+). The protein operates within amino-acid biosynthesis; L-arginine biosynthesis; N(2)-acetyl-L-ornithine from L-glutamate: step 3/4. In terms of biological role, catalyzes the NADPH-dependent reduction of N-acetyl-5-glutamyl phosphate to yield N-acetyl-L-glutamate 5-semialdehyde. The chain is N-acetyl-gamma-glutamyl-phosphate reductase from Thermotoga maritima (strain ATCC 43589 / DSM 3109 / JCM 10099 / NBRC 100826 / MSB8).